Here is a 290-residue protein sequence, read N- to C-terminus: Diaminopimelate epimerase (290 aa).

Substrate-binding residues include N17, Q49, and N69. The active-site Proton donor is C78. Residues 79-80 (GN), N165, N198, and 216-217 (ER) contribute to the substrate site. Catalysis depends on C225, which acts as the Proton acceptor. 226-227 (GS) is a substrate binding site.

Belongs to the diaminopimelate epimerase family. In terms of assembly, homodimer.

The protein localises to the cytoplasm. The enzyme catalyses (2S,6S)-2,6-diaminopimelate = meso-2,6-diaminopimelate. It functions in the pathway amino-acid biosynthesis; L-lysine biosynthesis via DAP pathway; DL-2,6-diaminopimelate from LL-2,6-diaminopimelate: step 1/1. Its function is as follows. Catalyzes the stereoinversion of LL-2,6-diaminopimelate (L,L-DAP) to meso-diaminopimelate (meso-DAP), a precursor of L-lysine and an essential component of the bacterial peptidoglycan. This chain is Diaminopimelate epimerase, found in Methylocella silvestris (strain DSM 15510 / CIP 108128 / LMG 27833 / NCIMB 13906 / BL2).